Consider the following 276-residue polypeptide: Transmembrane protein 45B (276 aa).

6 helical membrane passes run 7–27 (HALP…KYPL), 48–68 (IIEA…EQFV), 95–115 (LFFA…HVPL), 147–167 (IHSL…VEVV), 181–201 (LLLL…PPFG), and 213–233 (IMFV…ILAA). Phosphoserine occurs at positions 271 and 273.

This sequence belongs to the TMEM45 family.

The protein localises to the endosome membrane. Its subcellular location is the lysosome membrane. The protein resides in the golgi apparatus. It is found in the trans-Golgi network membrane. In terms of biological role, plays a role in innate immunity. The protein is Transmembrane protein 45B (TMEM45B) of Bos taurus (Bovine).